We begin with the raw amino-acid sequence, 424 residues long: Tyrosine--tRNA ligase (424 aa).

Tyr33 provides a ligand contact to L-tyrosine. Positions 38-47 match the 'HIGH' region motif; the sequence is PSADSLHIGH. The L-tyrosine site is built by Tyr170 and Gln174. The 'KMSKS' region motif lies at 230–234; it reads KFGKT. ATP is bound at residue Lys233. The region spanning 357–424 is the S4 RNA-binding domain; it reads MSLIDALVRC…RRHYHLIRLV (68 aa).

This sequence belongs to the class-I aminoacyl-tRNA synthetase family. TyrS type 1 subfamily. As to quaternary structure, homodimer.

The protein resides in the cytoplasm. It catalyses the reaction tRNA(Tyr) + L-tyrosine + ATP = L-tyrosyl-tRNA(Tyr) + AMP + diphosphate + H(+). Catalyzes the attachment of tyrosine to tRNA(Tyr) in a two-step reaction: tyrosine is first activated by ATP to form Tyr-AMP and then transferred to the acceptor end of tRNA(Tyr). This chain is Tyrosine--tRNA ligase, found in Roseiflexus castenholzii (strain DSM 13941 / HLO8).